We begin with the raw amino-acid sequence, 282 residues long: NFU1 iron-sulfur cluster scaffold homolog, mitochondrial (282 aa).

A mitochondrion-targeting transit peptide spans 1-27 (MSKLLSYTARIILRNSRITVRQLVRGF). A nifU region spans residues 178–246 (IKELLDTRIR…IPEVESVEQV (69 aa)). Residues Cys-215 and Cys-218 each contribute to the [4Fe-4S] cluster site. The disordered stretch occupies residues 263 to 282 (KNLKQKEPAGAPVGIGGGPN).

Belongs to the NifU family.

It localises to the mitochondrion. Functionally, molecular scaffold for [Fe-S] cluster assembly of mitochondrial iron-sulfur proteins. This chain is NFU1 iron-sulfur cluster scaffold homolog, mitochondrial, found in Drosophila persimilis (Fruit fly).